Consider the following 208-residue polypeptide: Small ribosomal subunit protein uS4 (208 aa).

One can recognise an S4 RNA-binding domain in the interval 98–161 (RRLDNTIYRL…RQSPIILEAQ (64 aa)).

It belongs to the universal ribosomal protein uS4 family. Part of the 30S ribosomal subunit. Contacts protein S5. The interaction surface between S4 and S5 is involved in control of translational fidelity.

Its function is as follows. One of the primary rRNA binding proteins, it binds directly to 16S rRNA where it nucleates assembly of the body of the 30S subunit. Functionally, with S5 and S12 plays an important role in translational accuracy. In Solidesulfovibrio magneticus (strain ATCC 700980 / DSM 13731 / RS-1) (Desulfovibrio magneticus), this protein is Small ribosomal subunit protein uS4.